The chain runs to 177 residues: Retrograde regulation protein 1 (177 aa).

The segment at 1 to 24 is disordered; the sequence is MSSIPAGTDPGSCGANFKNDRKRR. The bHLH domain occupies 11–96; that stretch reads GSCGANFKND…TQAVEYISHL (86 aa). Phosphoserine is present on residues serine 50 and serine 52. Disordered regions lie at residues 52–82 and 147–177; these read SNDT…KPNK and LAAT…GNGS. Threonine 60 carries the phosphothreonine modification. Positions 168–177 are enriched in gly residues; that stretch reads GGYGEYGNGS.

As to quaternary structure, binds DNA as a heterodimer with RTG3.

The protein localises to the nucleus. Its function is as follows. Required for a novel path of interorganelle communication between mitochondria, peroxisomes and the nucleus, thereby maintaining a functional metabolic interaction between the tricarboxylic acid and glyoxylate cycles. Transcription factor that regulates CIT2 gene expression. Binds to two identical sites oriented as inverted repeats 28 bp apart in a regulatory upstream activation sequence element (UASR) in the CIT2 promoter. The core binding site is 5'-GGTCAC-3'. This is Retrograde regulation protein 1 (RTG1) from Saccharomyces cerevisiae (strain ATCC 204508 / S288c) (Baker's yeast).